The chain runs to 265 residues: Probable DNA replication complex GINS protein PSF3 (265 aa).

The interval 180–265 (ISTSSNNKNN…KKRKRMFDDE (86 aa)) is disordered. A compositionally biased stretch (low complexity) spans 183–246 (SSNNKNNSSN…NNNNNSQNSS (64 aa)). The segment covering 255–265 (VKKRKRMFDDE) has biased composition (basic residues).

It belongs to the GINS3/PSF3 family. Component of the GINS complex which is a heterotetramer of gins1, gins2, gins3 and gins4.

The protein localises to the nucleus. In terms of biological role, the GINS complex plays an essential role in the initiation of DNA replication. This chain is Probable DNA replication complex GINS protein PSF3 (gins3), found in Dictyostelium discoideum (Social amoeba).